Here is a 263-residue protein sequence, read N- to C-terminus: Complement control protein C3 (263 aa).

Positions 1–19 (MKVESVTFLTLLGIGCVLS) are cleaved as a signal peptide. 4 consecutive Sushi domains span residues 20-83 (CCTI…QCIK), 84-145 (RRCP…ICES), 146-203 (VKCQ…TCQI), and 204-263 (VKCP…KCVR). 8 cysteine pairs are disulfide-bonded: cysteine 21–cysteine 70, cysteine 54–cysteine 81, cysteine 86–cysteine 126, cysteine 112–cysteine 143, cysteine 148–cysteine 190, cysteine 176–cysteine 201, cysteine 206–cysteine 248, and cysteine 234–cysteine 261.

The protein belongs to the receptors of complement activation (RCA) family. In terms of assembly, heterodimer with A56 protein; disulfide-linked.

The protein resides in the virion membrane. It localises to the host cell membrane. Its subcellular location is the secreted. In terms of biological role, serves to protect the virus against complement attack by inhibiting both classical and alternative pathways of complement activation. Binds C3b and C4b. The polypeptide is Complement control protein C3 (Vaccinia virus (strain Copenhagen) (VACV)).